The following is a 528-amino-acid chain: MPLTMSQAFIGNFLGNSPKWYKIAILSFLIINPILFFYVSPFVAGWVLVLEFIFTLAMALKCYPLQPGGLLAIEAVAIGMTSANQVLHEIEANLEVLLLLVFMVAGIYFMKQLLLFAFTKIITKVRSKILVSLMFCLTSAFLSAFLDALTVIAVIIAVAVGFYAIYHKVASGKDFSAVHDHTSESNTQLNNSELESFRGFLRNLLMHAGVGTALGGVCTMVGEPQNLIIAAQANWQFGEFVVRMSPVTVPVLIAGILTCLLVEKFRIFGYGAKLPDAVHKILCDYAAHEDAHRTNKDKMKLVIQVLVGVWLIAGLALHLASVGLVGLSVIILTTAFNGITDEHALGKAFEEALPFTALLAVFFAVVAVIIDQHLFAPVIQWALSYEGNTQLVIFYIANGLLSMVSDNVFVGTVYINEVKAALIDGQITRDQFDLLAVAINTGTNLPSVATPNGQAAFLFLLTSALAPLIRLSYGRMVWMALPYTIVLSVVGVLAIETGFLEQATQYFYDSHMIIHHSAKDVIAPLTSH.

The next 11 membrane-spanning stretches (helical) occupy residues 10–30, 63–83, 96–116, 131–165, 204–224, 240–260, 305–325, 359–379, 391–411, 449–469, and 476–496; these read IGNFLGNSPKWYKIAILSFLI, YPLQPGGLLAIEAVAIGMTSA, VLLLLVFMVAGIYFMKQLLLF, VSLMFCLTSAFLSAFLDALTVIAVIIAVAVGFYAI, LLMHAGVGTALGGVCTMVGEP, FVVRMSPVTVPVLIAGILTCL, VLVGVWLIAGLALHLASVGLV, LAVFFAVVAVIIDQHLFAPVI, LVIFYIANGLLSMVSDNVFVG, ATPNGQAAFLFLLTSALAPLI, and MVWMALPYTIVLSVVGVLAIE.

Belongs to the NhaB Na(+)/H(+) (TC 2.A.34) antiporter family.

It localises to the cell inner membrane. The enzyme catalyses 2 Na(+)(in) + 3 H(+)(out) = 2 Na(+)(out) + 3 H(+)(in). Functionally, na(+)/H(+) antiporter that extrudes sodium in exchange for external protons. This Shewanella sp. (strain W3-18-1) protein is Na(+)/H(+) antiporter NhaB.